The primary structure comprises 1029 residues: Carbamoyl phosphate synthase large chain (1029 aa).

The segment at 1–402 is carboxyphosphate synthetic domain; it reads MPKRTDLQTI…SLQKALRSTE (402 aa). ATP is bound by residues Arg129, Arg169, Gly175, Gly176, Glu208, Ile210, Glu215, Gly241, Val242, His243, Gln285, and Glu299. The ATP-grasp 1 domain occupies 133–328; the sequence is QAAMKKIGVE…IAKIAALLAV (196 aa). Residues Gln285, Glu299, and Asn301 each coordinate Mg(2+). Mn(2+)-binding residues include Gln285, Glu299, and Asn301. Positions 403 to 544 are oligomerization domain; the sequence is SDIRGVYAEM…YHYSTYEWED (142 aa). The segment at 545 to 929 is carbamoyl phosphate synthetic domain; it reads EVTGTDKPKV…AFYRAQLGAK (385 aa). The region spanning 671-863 is the ATP-grasp 2 domain; the sequence is NALCERLGLS…LAKSAARIAV (193 aa). ATP is bound by residues Arg707, Gln747, Leu749, Glu754, Gly779, Val780, His781, Ser782, Gln822, and Glu834. Gln822, Glu834, and Asn836 together coordinate Mg(2+). Residues Gln822, Glu834, and Asn836 each coordinate Mn(2+). Positions 930–1028 constitute an MGS-like domain; that stretch reads SYLPLSGTAL…QDWQTQEAVA (99 aa). The interval 930–1029 is allosteric domain; the sequence is SYLPLSGTAL…DWQTQEAVAG (100 aa).

The protein belongs to the CarB family. As to quaternary structure, composed of two chains; the small (or glutamine) chain promotes the hydrolysis of glutamine to ammonia, which is used by the large (or ammonia) chain to synthesize carbamoyl phosphate. Tetramer of heterodimers (alpha,beta)4. The cofactor is Mg(2+). Requires Mn(2+) as cofactor.

The enzyme catalyses hydrogencarbonate + L-glutamine + 2 ATP + H2O = carbamoyl phosphate + L-glutamate + 2 ADP + phosphate + 2 H(+). It carries out the reaction hydrogencarbonate + NH4(+) + 2 ATP = carbamoyl phosphate + 2 ADP + phosphate + 2 H(+). The protein operates within amino-acid biosynthesis; L-arginine biosynthesis; carbamoyl phosphate from bicarbonate: step 1/1. Its pathway is pyrimidine metabolism; UMP biosynthesis via de novo pathway; (S)-dihydroorotate from bicarbonate: step 1/3. In terms of biological role, large subunit of the glutamine-dependent carbamoyl phosphate synthetase (CPSase). CPSase catalyzes the formation of carbamoyl phosphate from the ammonia moiety of glutamine, carbonate, and phosphate donated by ATP, constituting the first step of 2 biosynthetic pathways, one leading to arginine and/or urea and the other to pyrimidine nucleotides. The large subunit (synthetase) binds the substrates ammonia (free or transferred from glutamine from the small subunit), hydrogencarbonate and ATP and carries out an ATP-coupled ligase reaction, activating hydrogencarbonate by forming carboxy phosphate which reacts with ammonia to form carbamoyl phosphate. The sequence is that of Carbamoyl phosphate synthase large chain from Deinococcus deserti (strain DSM 17065 / CIP 109153 / LMG 22923 / VCD115).